The sequence spans 204 residues: Probable nicotinate-nucleotide adenylyltransferase (204 aa).

It belongs to the NadD family.

It catalyses the reaction nicotinate beta-D-ribonucleotide + ATP + H(+) = deamido-NAD(+) + diphosphate. It functions in the pathway cofactor biosynthesis; NAD(+) biosynthesis; deamido-NAD(+) from nicotinate D-ribonucleotide: step 1/1. In terms of biological role, catalyzes the reversible adenylation of nicotinate mononucleotide (NaMN) to nicotinic acid adenine dinucleotide (NaAD). The polypeptide is Probable nicotinate-nucleotide adenylyltransferase (Dehalococcoides mccartyi (strain ATCC BAA-2266 / KCTC 15142 / 195) (Dehalococcoides ethenogenes (strain 195))).